A 464-amino-acid polypeptide reads, in one-letter code: MNNDNTEVLENYPQDGLQSNSHIIWKGIQSRLHKFYGNAIYDSWLSVLLYVSTESGKVLLSAPTRFIKEWILVHYLDQILKYWQDEDQSICSVDICVVSNQDPNLLVDIKDRVDRGIKGNCDNVSSPLDPRFTFDNFVVGKPNELAFAAARRVAESNSPISGSNPLFLYGGVGLGKTHLMHAIAWYIIKSCSKRKIAYLSAEKFMYQYVTALRSKDIMLFKEQFRSVDILMVDDVQFISGKDSTQEEFFHTFNALIDQNKQLVISADRSPSDLDGVEERIKSRLGWGLVADINETTFELRLGILQLKVEKMGINIPNKVLEFLAKNIKSNIRELEGALNKVVAHSSLVGCSITLDTASDILSDLLRANHKSVTLECIQKKVAEFFNIKVSDMYSTRRLRTLARPRQIAMYLSKKLTQKSLPEIGKSFGGRDHATVIHAVKQIEKLMDTDSKLRDDINLLNRMLR.

The segment at 1-90 is domain I, interacts with DnaA modulators; the sequence is MNNDNTEVLE…KYWQDEDQSI (90 aa). The tract at residues 90–126 is domain II; it reads ICSVDICVVSNQDPNLLVDIKDRVDRGIKGNCDNVSS. A domain III, AAA+ region region spans residues 127-345; that stretch reads PLDPRFTFDN…GALNKVVAHS (219 aa). ATP-binding residues include Gly173, Gly175, Lys176, and Thr177. The domain IV, binds dsDNA stretch occupies residues 346 to 464; sequence SLVGCSITLD…DINLLNRMLR (119 aa).

Belongs to the DnaA family. As to quaternary structure, oligomerizes as a right-handed, spiral filament on DNA at oriC.

The protein localises to the cytoplasm. In terms of biological role, plays an essential role in the initiation and regulation of chromosomal replication. ATP-DnaA binds to the origin of replication (oriC) to initiate formation of the DNA replication initiation complex once per cell cycle. Binds the DnaA box (a 9 base pair repeat at the origin) and separates the double-stranded (ds)DNA. Forms a right-handed helical filament on oriC DNA; dsDNA binds to the exterior of the filament while single-stranded (ss)DNA is stabiized in the filament's interior. The ATP-DnaA-oriC complex binds and stabilizes one strand of the AT-rich DNA unwinding element (DUE), permitting loading of DNA polymerase. After initiation quickly degrades to an ADP-DnaA complex that is not apt for DNA replication. Binds acidic phospholipids. This is Chromosomal replication initiator protein DnaA from Ehrlichia ruminantium (strain Gardel).